The chain runs to 261 residues: Membrane protein insertase MisCA (261 aa).

Positions 1-22 are cleaved as a signal peptide; sequence MLLKRRIGLLLSMVGVFMLLAG. Cysteine 23 is lipidated: N-palmitoyl cysteine. Residue cysteine 23 is the site of S-diacylglycerol cysteine attachment. A run of 5 helical transmembrane segments spans residues 61-81, 131-151, 174-194, 204-224, and 225-245; these read YGLS…PLMI, LAGC…YHAI, YILP…MMAG, MMLW…PAAL, and SLYW…IKGP.

The protein belongs to the OXA1/ALB3/YidC family. Type 2 subfamily. In terms of assembly, mostly monomeric, it may also form dimers. Interacts with SpoIIIAE. Forms a complex with the F(1)F(0) ATP synthase in which can be found the alpha, beta, gamma, delta and epsilon subunits of F(1) and a, b and subunits of F(0). YqgA is found in the same complex.

Its subcellular location is the cell membrane. Required for the insertion and/or proper folding and/or complex formation of integral membrane proteins into the membrane. Involved in integration of membrane proteins that insert both dependently and independently of the Sec translocase complex, as well as at least some lipoproteins. Also involved in protein secretion processes. Essential for sporulation by activating sigma factor SpoIIIG/SigG after engulfment is completed in the prespore, maybe by acting on SpoIIIAE. It has an overlapping, although partly distinct, function compared to YqjG(MisCB). In Bacillus subtilis (strain 168), this protein is Membrane protein insertase MisCA (misCA).